Consider the following 447-residue polypeptide: Tubulin beta-2 chain (447 aa).

GTP is bound by residues Gln-11, Glu-69, Ser-138, Gly-142, Thr-143, Gly-144, Asn-204, and Asn-226. Glu-69 lines the Mg(2+) pocket. Positions 427–447 (DASISEGEEEYEEEQQLENEE) are disordered. Positions 432 to 447 (EGEEEYEEEQQLENEE) are enriched in acidic residues.

Belongs to the tubulin family. As to quaternary structure, dimer of alpha and beta chains. A typical microtubule is a hollow water-filled tube with an outer diameter of 25 nm and an inner diameter of 15 nM. Alpha-beta heterodimers associate head-to-tail to form protofilaments running lengthwise along the microtubule wall with the beta-tubulin subunit facing the microtubule plus end conferring a structural polarity. Microtubules usually have 13 protofilaments but different protofilament numbers can be found in some organisms and specialized cells. It depends on Mg(2+) as a cofactor.

Its subcellular location is the cytoplasm. It localises to the cytoskeleton. Its function is as follows. Tubulin is the major constituent of microtubules, a cylinder consisting of laterally associated linear protofilaments composed of alpha- and beta-tubulin heterodimers. Microtubules grow by the addition of GTP-tubulin dimers to the microtubule end, where a stabilizing cap forms. Below the cap, tubulin dimers are in GDP-bound state, owing to GTPase activity of alpha-tubulin. This is Tubulin beta-2 chain (TUB2) from Erysiphe pisi (Pea powdery mildew).